Reading from the N-terminus, the 143-residue chain is Large ribosomal subunit protein uL11 (143 aa).

The protein belongs to the universal ribosomal protein uL11 family. Part of the ribosomal stalk of the 50S ribosomal subunit. Interacts with L10 and the large rRNA to form the base of the stalk. L10 forms an elongated spine to which L12 dimers bind in a sequential fashion forming a multimeric L10(L12)X complex. One or more lysine residues are methylated.

Functionally, forms part of the ribosomal stalk which helps the ribosome interact with GTP-bound translation factors. The protein is Large ribosomal subunit protein uL11 of Azotobacter vinelandii (strain DJ / ATCC BAA-1303).